The following is a 151-amino-acid chain: Receptor activity-modifying protein 3 (151 aa).

The signal sequence occupies residues 1–30 (MEATAPRRRHLLPLLLLLLLLCGECPPVSG). The Extracellular segment spans residues 31 to 116 (CNEKRMLAML…CSVDRQQWQD (86 aa)). Intrachain disulfides connect Cys-43/Cys-75 and Cys-60/Cys-107. 2 N-linked (GlcNAc...) asparagine glycosylation sites follow: Asn-61 and Asn-106. A helical membrane pass occupies residues 117–141 (PPDEILIPLIVVPILLTLAMTGLVV). At 142–151 (WRSKRAAQVV) the chain is on the cytoplasmic side.

This sequence belongs to the RAMP family. In terms of assembly, heterodimer of CALCRL and RAMP3; interaction induces allosteric modulation of CALCRL function and ligand specificity for adrenomedullin/ADM and intermedin/ADM2. Heterodimer of CALCR and RAMP3; interaction form the receptor complex AMYR3 for amylin/IAPP. Interacts with GPER1.

Its subcellular location is the cell membrane. It localises to the membrane. Accessory protein that interacts with and modulates the function of G-protein coupled receptors including calcitonin gene-related peptide type 1 receptor (CALCRL), calcitonin receptor (CALCR) and G-protein coupled estrogen receptor 1 (GPER1). Required for the transport of CALCRL and GPER1 receptors to the plasma membrane. Plays a role in cardioprotection by reducing cardiac hypertrophy and perivascular fibrosis in a GPER1-dependent manner. Together with CALCRL, form a receptor complex for adrenomedullin/ADM and intermedin/ADM2. Together with CALCR, act as a receptor complex for amylin/IAPP. In Sus scrofa (Pig), this protein is Receptor activity-modifying protein 3 (RAMP3).